We begin with the raw amino-acid sequence, 405 residues long: Protein NDRG4 (405 aa).

Positions 352–405 (AGAVPSASMTRLARSRTASLTSASSVDGARPRPCTQSESSDGIGQINHTMEVSC) are disordered. Residues 361 to 376 (TRLARSRTASLTSASS) are compositionally biased toward low complexity. Polar residues predominate over residues 385–405 (CTQSESSDGIGQINHTMEVSC).

Belongs to the NDRG family.

The protein localises to the cytoplasm. It localises to the cytosol. Contributes to the maintenance of intracerebral BDNF levels within the normal range. May enhance growth factor-induced ERK1 and ERK2 phosphorylation. May attenuate growth factor-promoted ELK1 phosphorylation in a microtubule-dependent manner. This Xenopus tropicalis (Western clawed frog) protein is Protein NDRG4.